We begin with the raw amino-acid sequence, 417 residues long: Serine hydroxymethyltransferase (417 aa).

Residues leucine 121 and 125–127 (GHL) each bind (6S)-5,6,7,8-tetrahydrofolate. Position 229 is an N6-(pyridoxal phosphate)lysine (lysine 229). 355 to 357 (SPF) contributes to the (6S)-5,6,7,8-tetrahydrofolate binding site.

Belongs to the SHMT family. Homodimer. Pyridoxal 5'-phosphate serves as cofactor.

The protein localises to the cytoplasm. It carries out the reaction (6R)-5,10-methylene-5,6,7,8-tetrahydrofolate + glycine + H2O = (6S)-5,6,7,8-tetrahydrofolate + L-serine. Its pathway is one-carbon metabolism; tetrahydrofolate interconversion. The protein operates within amino-acid biosynthesis; glycine biosynthesis; glycine from L-serine: step 1/1. Its function is as follows. Catalyzes the reversible interconversion of serine and glycine with tetrahydrofolate (THF) serving as the one-carbon carrier. This reaction serves as the major source of one-carbon groups required for the biosynthesis of purines, thymidylate, methionine, and other important biomolecules. Also exhibits THF-independent aldolase activity toward beta-hydroxyamino acids, producing glycine and aldehydes, via a retro-aldol mechanism. The chain is Serine hydroxymethyltransferase from Xanthomonas campestris pv. campestris (strain 8004).